The chain runs to 285 residues: Pseudouridine-5'-phosphate glycosidase (285 aa).

Residue glutamate 17 is the Proton donor of the active site. Positions 77 and 97 each coordinate substrate. Aspartate 126 lines the Mn(2+) pocket. Substrate is bound at residue 128-130; sequence SQD. Lysine 147 (nucleophile) is an active-site residue.

This sequence belongs to the pseudouridine-5'-phosphate glycosidase family. As to quaternary structure, homotrimer. Requires Mn(2+) as cofactor.

The enzyme catalyses D-ribose 5-phosphate + uracil = psi-UMP + H2O. Catalyzes the reversible cleavage of pseudouridine 5'-phosphate (PsiMP) to ribose 5-phosphate and uracil. Functions biologically in the cleavage direction, as part of a pseudouridine degradation pathway. In Thermotoga sp. (strain RQ2), this protein is Pseudouridine-5'-phosphate glycosidase.